The primary structure comprises 305 residues: Suppressor of activated egl-4 protein 2 (305 aa).

The tract at residues 138 to 168 (KRGYESDSSDVSGVSHCSDAKRRRGRPRKDE) is disordered. The a.T hook DNA-binding region spans 158 to 170 (KRRRGRPRKDEEA).

In terms of assembly, interacts with phosphorylated egl-4. May interact with itself. May be a component of a histone deacetylase complex containing saeg-2, saeg-1 and hda-2. In terms of tissue distribution, ubiquitously expressed.

The protein resides in the nucleus. Its function is as follows. As a likely component of a histone deacetylase complex, together with saeg-1 and hda-2, functions downstream of the cAMP-dependent kinase egl-4 to regulate the expression of genes required for egg-laying and foraging. This Caenorhabditis elegans protein is Suppressor of activated egl-4 protein 2.